The following is a 151-amino-acid chain: Ribonuclease H (151 aa).

Residues 1–143 (MSDVVVIHTD…ADVLATRGLQ (143 aa)) enclose the RNase H type-1 domain. Mg(2+) is bound by residues Asp-10, Glu-49, Asp-71, and Asp-135.

Belongs to the RNase H family. Monomer. The cofactor is Mg(2+).

It localises to the cytoplasm. It catalyses the reaction Endonucleolytic cleavage to 5'-phosphomonoester.. Endonuclease that specifically degrades the RNA of RNA-DNA hybrids. This is Ribonuclease H from Mycolicibacterium gilvum (strain PYR-GCK) (Mycobacterium gilvum (strain PYR-GCK)).